We begin with the raw amino-acid sequence, 274 residues long: Large ribosomal subunit protein uL2 (274 aa).

The tract at residues 195-274 (VGNSDHGLER…SKYIIERRKK (80 aa)) is disordered. 2 stretches are compositionally biased toward basic residues: residues 207-220 (KAGRSRWQGRRPRN) and 244-264 (PRSRKGLYAKGLKTRAPKKQS).

This sequence belongs to the universal ribosomal protein uL2 family. In terms of assembly, part of the 50S ribosomal subunit. Forms a bridge to the 30S subunit in the 70S ribosome.

Functionally, one of the primary rRNA binding proteins. Required for association of the 30S and 50S subunits to form the 70S ribosome, for tRNA binding and peptide bond formation. It has been suggested to have peptidyltransferase activity; this is somewhat controversial. Makes several contacts with the 16S rRNA in the 70S ribosome. This is Large ribosomal subunit protein uL2 from Bacteroides thetaiotaomicron (strain ATCC 29148 / DSM 2079 / JCM 5827 / CCUG 10774 / NCTC 10582 / VPI-5482 / E50).